The primary structure comprises 126 residues: Large ribosomal subunit protein bL12 (126 aa).

The protein belongs to the bacterial ribosomal protein bL12 family. As to quaternary structure, homodimer. Part of the ribosomal stalk of the 50S ribosomal subunit. Forms a multimeric L10(L12)X complex, where L10 forms an elongated spine to which 2 to 4 L12 dimers bind in a sequential fashion. Binds GTP-bound translation factors.

Functionally, forms part of the ribosomal stalk which helps the ribosome interact with GTP-bound translation factors. Is thus essential for accurate translation. The sequence is that of Large ribosomal subunit protein bL12 from Chlorobaculum parvum (strain DSM 263 / NCIMB 8327) (Chlorobium vibrioforme subsp. thiosulfatophilum).